The primary structure comprises 487 residues: E3 ubiquitin-protein ligase TRIM50 (487 aa).

The segment at 16–57 adopts an RING-type zinc-finger fold; sequence CPICLEVFKEPLMLQCGHSYCKGCLVSLSCHLDAELRCPVCR. The B box-type zinc-finger motif lies at 84–125; sequence PEPKVCVHHRNPLSLFCEKDQELICGLCGLLGSHQHHPVTPV. Zn(2+)-binding residues include cysteine 89, histidine 92, cysteine 111, and histidine 117. Coiled coils occupy residues 125–169 and 204–235; these read VSTV…NESD and LVAS…FGNE. A B30.2/SPRY domain is found at 276 to 475; that stretch reads DIKLTVWKRL…LPMVLPPPSG (200 aa). At lysine 373 the chain carries N6-acetyllysine. The interval 468-487 is disordered; that stretch reads MVLPPPSGPGPLSPEQPTKL. A compositionally biased stretch (pro residues) spans 469–481; it reads VLPPPSGPGPLSP.

This sequence belongs to the TRIM/RBCC family. In terms of assembly, can form dimers and trimers. Interacts with several E2 ubiquitin-conjugating enzymes, including UBE2L6, UBE2E1, UBE2E3. No interaction with UBE2H. Interacts with BECN1. Interacts with SQSTM1. Interacts with NLRP3. Auto-ubiquitinated. Post-translationally, acetylated by EP300 and KAT2B. HDAC6 drives TRIM50 deacetylation. Acetylation antagonizes with TRIM50 ubiquitination.

It localises to the cytoplasm. It catalyses the reaction S-ubiquitinyl-[E2 ubiquitin-conjugating enzyme]-L-cysteine + [acceptor protein]-L-lysine = [E2 ubiquitin-conjugating enzyme]-L-cysteine + N(6)-ubiquitinyl-[acceptor protein]-L-lysine.. Its function is as follows. E3 ubiquitin-protein ligase that ubiquitinates Beclin-1/BECN1 in a 'Lys-63'-dependent manner enhancing its binding to ULK1. In turn, promotes starvation-induced autophagy activation. Also interacts with p62/SQSTM1 protein and thereby induces the formation and the autophagy clearance of aggresome-associated polyubiquitinated proteins through HDAC6 interaction. Also promotes NLRP3 inflammasome activation by directly inducing NLRP3 oligomerization independent of its E3 ligase function. This chain is E3 ubiquitin-protein ligase TRIM50, found in Homo sapiens (Human).